A 175-amino-acid polypeptide reads, in one-letter code: Large ribosomal subunit protein uL10 (175 aa).

It belongs to the universal ribosomal protein uL10 family. In terms of assembly, part of the ribosomal stalk of the 50S ribosomal subunit. The N-terminus interacts with L11 and the large rRNA to form the base of the stalk. The C-terminus forms an elongated spine to which L12 dimers bind in a sequential fashion forming a multimeric L10(L12)X complex.

Functionally, forms part of the ribosomal stalk, playing a central role in the interaction of the ribosome with GTP-bound translation factors. This Prochlorococcus marinus (strain MIT 9515) protein is Large ribosomal subunit protein uL10.